The following is a 516-amino-acid chain: Cytochrome P450 1A2 (516 aa).

Residue S69 is glycosylated (O-linked (GlcNAc) serine). Substrate contacts are provided by residues F226 and 361–365 (DRPQL). C458 serves as a coordination point for heme.

The protein belongs to the cytochrome P450 family. Interacts with PGRMC1; the interaction requires PGRMC1 homodimerization. It depends on heme as a cofactor.

The protein resides in the endoplasmic reticulum membrane. Its subcellular location is the microsome membrane. The enzyme catalyses an organic molecule + reduced [NADPH--hemoprotein reductase] + O2 = an alcohol + oxidized [NADPH--hemoprotein reductase] + H2O + H(+). The catalysed reaction is 17beta-estradiol + reduced [NADPH--hemoprotein reductase] + O2 = 2-hydroxy-17beta-estradiol + oxidized [NADPH--hemoprotein reductase] + H2O + H(+). It carries out the reaction 17beta-estradiol + reduced [NADPH--hemoprotein reductase] + O2 = 4-hydroxy-17beta-estradiol + oxidized [NADPH--hemoprotein reductase] + H2O + H(+). It catalyses the reaction estrone + reduced [NADPH--hemoprotein reductase] + O2 = 2-hydroxyestrone + oxidized [NADPH--hemoprotein reductase] + H2O + H(+). The enzyme catalyses estrone + reduced [NADPH--hemoprotein reductase] + O2 = 4-hydroxyestrone + oxidized [NADPH--hemoprotein reductase] + H2O + H(+). The catalysed reaction is cholesterol + reduced [NADPH--hemoprotein reductase] + O2 = 25-hydroxycholesterol + oxidized [NADPH--hemoprotein reductase] + H2O + H(+). It carries out the reaction all-trans-retinol + reduced [NADPH--hemoprotein reductase] + O2 = all-trans-retinal + oxidized [NADPH--hemoprotein reductase] + 2 H2O + H(+). It catalyses the reaction all-trans-retinal + reduced [NADPH--hemoprotein reductase] + O2 = all-trans-retinoate + oxidized [NADPH--hemoprotein reductase] + H2O + 2 H(+). The enzyme catalyses (5Z,8Z,11Z,14Z)-eicosatetraenoate + reduced [NADPH--hemoprotein reductase] + O2 = (14R,15S)-epoxy-(5Z,8Z,11Z)-eicosatrienoate + oxidized [NADPH--hemoprotein reductase] + H2O + H(+). The catalysed reaction is (5Z,8Z,11Z,14Z)-eicosatetraenoate + reduced [NADPH--hemoprotein reductase] + O2 = (14S,15R)-epoxy-(5Z,8Z,11Z)-eicosatrienoate + oxidized [NADPH--hemoprotein reductase] + H2O + H(+). It carries out the reaction (5Z,8Z,11Z,14Z,17Z)-eicosapentaenoate + reduced [NADPH--hemoprotein reductase] + O2 = (17R,18S)-epoxy-(5Z,8Z,11Z,14Z)-eicosatetraenoate + oxidized [NADPH--hemoprotein reductase] + H2O + H(+). It catalyses the reaction (4Z,7Z,10Z,13Z,16Z,19Z)-docosahexaenoate + reduced [NADPH--hemoprotein reductase] + O2 = (19R,20S)-epoxy-(4Z,7Z,10Z,13Z,16Z)-docosapentaenoate + oxidized [NADPH--hemoprotein reductase] + H2O + H(+). The enzyme catalyses (5S)-hydroperoxy-(6E,8Z,11Z,14Z)-eicosatetraenoate = 5-oxo-(6E,8Z,11Z,14Z)-eicosatetraenoate + H2O. The catalysed reaction is (12S)-hydroperoxy-(5Z,8Z,10E,14Z)-eicosatetraenoate = 12-oxo-(5Z,8Z,10E,14Z)-eicosatetraenoate + H2O. It carries out the reaction (15S)-hydroperoxy-(5Z,8Z,11Z,13E)-eicosatetraenoate = 15-oxo-(5Z,8Z,11Z,13E)-eicosatetraenoate + H2O. It catalyses the reaction (13S)-hydroperoxy-(9Z,11E)-octadecadienoate = 13-oxo-(9Z,11E)-octadecadienoate + H2O. The enzyme catalyses (5Z,8Z,11Z,14Z)-eicosatetraenoate + reduced [NADPH--hemoprotein reductase] + O2 = 13-hydroxy-(5Z,8Z,11Z,14Z)-eicosatetraenoate + oxidized [NADPH--hemoprotein reductase] + H2O + H(+). The catalysed reaction is (5Z,8Z,11Z,14Z)-eicosatetraenoate + reduced [NADPH--hemoprotein reductase] + O2 = 19-hydroxy-(5Z,8Z,11Z,14Z)-eicosatetraenoate + oxidized [NADPH--hemoprotein reductase] + H2O + H(+). It carries out the reaction (9Z,12Z)-octadecadienoate + reduced [NADPH--hemoprotein reductase] + O2 = 11-hydroxy-(9Z,12Z)-octadecadienoate + oxidized [NADPH--hemoprotein reductase] + H2O + H(+). Its pathway is cofactor metabolism; retinol metabolism. The protein operates within steroid metabolism; cholesterol metabolism. It participates in lipid metabolism; arachidonate metabolism. Functionally, a cytochrome P450 monooxygenase involved in the metabolism of various endogenous substrates, including fatty acids, steroid hormones and vitamins. Mechanistically, uses molecular oxygen inserting one oxygen atom into a substrate, and reducing the second into a water molecule, with two electrons provided by NADPH via cytochrome P450 reductase (NADPH--hemoprotein reductase). Catalyzes the hydroxylation of carbon-hydrogen bonds. Exhibits high catalytic activity for the formation of hydroxyestrogens from estrone (E1) and 17beta-estradiol (E2), namely 2-hydroxy E1 and E2. Metabolizes cholesterol toward 25-hydroxycholesterol, a physiological regulator of cellular cholesterol homeostasis. May act as a major enzyme for all-trans retinoic acid biosynthesis in the liver. Catalyzes two successive oxidative transformation of all-trans retinol to all-trans retinal and then to the active form all-trans retinoic acid. Primarily catalyzes stereoselective epoxidation of the last double bond of polyunsaturated fatty acids (PUFA), displaying a strong preference for the (R,S) stereoisomer. Catalyzes bisallylic hydroxylation and omega-1 hydroxylation of PUFA. May also participate in eicosanoids metabolism by converting hydroperoxide species into oxo metabolites (lipoxygenase-like reaction, NADPH-independent). Plays a role in the oxidative metabolism of xenobiotics. Catalyzes the N-hydroxylation of heterocyclic amines and the O-deethylation of phenacetin. Metabolizes caffeine via N3-demethylation. The sequence is that of Cytochrome P450 1A2 (CYP1A2) from Oryctolagus cuniculus (Rabbit).